Reading from the N-terminus, the 277-residue chain is Large ribosomal subunit protein uL2 (277 aa).

Residues 226–277 (MNPVDHPHGGGEGRSPIGMPSPVTPWGKPTLGYKTRKPNKKSDRLIVSRRKK) form a disordered region.

This sequence belongs to the universal ribosomal protein uL2 family. Part of the 50S ribosomal subunit. Forms a bridge to the 30S subunit in the 70S ribosome.

Its function is as follows. One of the primary rRNA binding proteins. Required for association of the 30S and 50S subunits to form the 70S ribosome, for tRNA binding and peptide bond formation. It has been suggested to have peptidyltransferase activity; this is somewhat controversial. Makes several contacts with the 16S rRNA in the 70S ribosome. The polypeptide is Large ribosomal subunit protein uL2 (Symbiobacterium thermophilum (strain DSM 24528 / JCM 14929 / IAM 14863 / T)).